The sequence spans 513 residues: Zinc finger CCCH-type with G patch domain-containing protein (513 aa).

Position 1 is an N-acetylmethionine (Met1). Residues 90-131 (EVPVAPGAELETVPSRETGPGPTERGQEEDDGEDEEGGAALS) form a disordered region. Positions 116–126 (QEEDDGEDEEG) are enriched in acidic residues. Residues 176-202 (KSLKPCSFFLEGKCRFQENCRFSHGQV) form a C3H1-type zinc finger. The interval 267 to 296 (LPPLRTEPAGSSDSDGSDADDPSYARVVEP) is disordered. Phosphoserine occurs at positions 278 and 355. Residues 315 to 361 (TRGIGSRLLAKMGYEFGKGLGRHAEGRVEPVHAVVLPRGKSLDQCAE) enclose the G-patch domain. Disordered stretches follow at residues 367–394 (TRAG…PPPR) and 492–513 (AQEA…MTEF). Basic and acidic residues predominate over residues 497–513 (LQREQRKADTHKKMTEF).

As to quaternary structure, interacts with CHD4/Mi-2; the interaction is direct.

Its subcellular location is the nucleus. Transcription repressor that specifically binds the 5'-GGAG[GA]A[GA]A-3' consensus sequence. Represses transcription by recruiting the chromatin multiprotein complex NuRD to target promoters. Negatively regulates expression of EGFR, a gene involved in cell proliferation, survival and migration. Its ability to repress genes of the EGFR pathway suggest it may act as a tumor suppressor. This chain is Zinc finger CCCH-type with G patch domain-containing protein (ZGPAT), found in Bos taurus (Bovine).